The sequence spans 70 residues: UPF0150 protein TM_1311 (70 aa).

The protein belongs to the UPF0150 family.

This Thermotoga maritima (strain ATCC 43589 / DSM 3109 / JCM 10099 / NBRC 100826 / MSB8) protein is UPF0150 protein TM_1311.